The sequence spans 699 residues: MPGGSSGNDNVRVVVRCRPLNSKETGQGFKSVVKMDEMRGTVQVTNPNAPSGEPPKSFTFDTVFAPGAKQTDVYNQTARPIVDAIIEGYNGTIFAYGQTGTGKTFTMEGVRSQPELRGIIPNSFAHIFGHIAKEQENVRFLVRVSYLEIYNEEVKDLLGKDQQHRLEVKERPDVGVYVKDLSAFVVNNADDMDRIMTLGNKNRSVGATNMNESSSRSHAIFTITLERSDMGLDKEQHVRVGKLHMVDLAGSERQTKTGATGQRLKEATKINLSLSTLGNVISSLVDGKSTHIPYRNSKLTRLLQDSLGGNAKTVMCANIGPAEYNYDETISTLRYANRAKNIKNKAKINEDPKDALLREFQKEIEELKKQISESGEGLDDDEESGSEESGDEEAGEGGVKKKRKGKNPKRKLSPEIMAAMQKKIDEEKKALEEKKDMVEEDRNTVHRELQRRESELHKAQDDQKILNEKLNAIQKKLIVGGVDLLAKSEEQEQLLEQSALEMKERMAKQESMRKMMEEREQERMDIEEKYSSLQDEAHGKTKKLKKVWTMLMQAKSEVADMQAEHQREMEALLENVRELSRELRLSMLIIDSFIPQEFQEMIEQYVHWNEDIGEWQLKCVAYTGNNMRKQTPVADKDKSLAYGEADLSNVFLTYNLEGGGMKYKPSQGKSGRPKTSSGRPKTGKKKQASMASSIDALLQ.

One can recognise a Kinesin motor domain in the interval 10 to 342; the sequence is NVRVVVRCRP…LRYANRAKNI (333 aa). An ATP-binding site is contributed by 97–104; the sequence is GQTGTGKT. Positions 341–619 form a coiled coil; sequence NIKNKAKINE…EDIGEWQLKC (279 aa). Disordered stretches follow at residues 369 to 415, 432 to 456, and 660 to 699; these read KQIS…LSPE, EEKK…ESEL, and GMKY…ALLQ. The segment covering 376 to 395 has biased composition (acidic residues); it reads EGLDDDEESGSEESGDEEAG. A compositionally biased stretch (basic residues) spans 400 to 411; the sequence is KKKRKGKNPKRK. Positions 620 to 699 are globular; it reads VAYTGNNMRK…MASSIDALLQ (80 aa). The span at 667–679 shows a compositional bias: polar residues; the sequence is QGKSGRPKTSSGR.

Belongs to the TRAFAC class myosin-kinesin ATPase superfamily. Kinesin family. Kinesin II subfamily. As to quaternary structure, heterotrimer of a 115 kDa subunit (KAP115) and two kinesin-like subunits of 95 kDa (KRP95) and 85 kDa (KRP85). Post-translationally, the N-terminus is blocked.

The protein resides in the cytoplasm. It is found in the cytoskeleton. This chain is Kinesin-II 85 kDa subunit (KRP85), found in Strongylocentrotus purpuratus (Purple sea urchin).